The following is a 272-amino-acid chain: 3-methyl-2-oxobutanoate hydroxymethyltransferase (272 aa).

Positions 53 and 92 each coordinate Mg(2+). Residues 53–54 (DS), aspartate 92, and lysine 120 each bind 3-methyl-2-oxobutanoate. Glutamate 122 is a binding site for Mg(2+). Glutamate 189 serves as the catalytic Proton acceptor.

Belongs to the PanB family. As to quaternary structure, homodecamer; pentamer of dimers. It depends on Mg(2+) as a cofactor.

The protein localises to the cytoplasm. The enzyme catalyses 3-methyl-2-oxobutanoate + (6R)-5,10-methylene-5,6,7,8-tetrahydrofolate + H2O = 2-dehydropantoate + (6S)-5,6,7,8-tetrahydrofolate. Its pathway is cofactor biosynthesis; (R)-pantothenate biosynthesis; (R)-pantoate from 3-methyl-2-oxobutanoate: step 1/2. Functionally, catalyzes the reversible reaction in which hydroxymethyl group from 5,10-methylenetetrahydrofolate is transferred onto alpha-ketoisovalerate to form ketopantoate. In Ralstonia pickettii (strain 12J), this protein is 3-methyl-2-oxobutanoate hydroxymethyltransferase.